An 89-amino-acid polypeptide reads, in one-letter code: Small ribosomal subunit protein uS15 (89 aa).

This sequence belongs to the universal ribosomal protein uS15 family. Part of the 30S ribosomal subunit. Forms a bridge to the 50S subunit in the 70S ribosome, contacting the 23S rRNA.

Its function is as follows. One of the primary rRNA binding proteins, it binds directly to 16S rRNA where it helps nucleate assembly of the platform of the 30S subunit by binding and bridging several RNA helices of the 16S rRNA. In terms of biological role, forms an intersubunit bridge (bridge B4) with the 23S rRNA of the 50S subunit in the ribosome. In Nitratiruptor sp. (strain SB155-2), this protein is Small ribosomal subunit protein uS15.